A 504-amino-acid polypeptide reads, in one-letter code: Maturase K (504 aa).

The protein belongs to the intron maturase 2 family. MatK subfamily.

The protein resides in the plastid. The protein localises to the chloroplast. Functionally, usually encoded in the trnK tRNA gene intron. Probably assists in splicing its own and other chloroplast group II introns. In Fagus crenata (Japanese beech), this protein is Maturase K.